We begin with the raw amino-acid sequence, 475 residues long: 3-isopropylmalate dehydratase large subunit (475 aa).

The [4Fe-4S] cluster site is built by cysteine 348, cysteine 408, and cysteine 411.

Belongs to the aconitase/IPM isomerase family. LeuC type 1 subfamily. In terms of assembly, heterodimer of LeuC and LeuD. [4Fe-4S] cluster is required as a cofactor.

It catalyses the reaction (2R,3S)-3-isopropylmalate = (2S)-2-isopropylmalate. It functions in the pathway amino-acid biosynthesis; L-leucine biosynthesis; L-leucine from 3-methyl-2-oxobutanoate: step 2/4. Functionally, catalyzes the isomerization between 2-isopropylmalate and 3-isopropylmalate, via the formation of 2-isopropylmaleate. The protein is 3-isopropylmalate dehydratase large subunit of Acidobacterium capsulatum (strain ATCC 51196 / DSM 11244 / BCRC 80197 / JCM 7670 / NBRC 15755 / NCIMB 13165 / 161).